The sequence spans 205 residues: Ephrin-A1 (205 aa).

The first 18 residues, 1–18 (MEFLWAPLLGLCCSLAAA), serve as a signal peptide directing secretion. One can recognise an Ephrin RBD domain in the interval 19 to 151 (DRHTVFWNSS…KLKVTVSGKI (133 aa)). N26 carries an N-linked (GlcNAc...) asparagine glycan. Disulfide bonds link C51-C92 and C80-C140. S182 carries the GPI-anchor amidated serine lipid modification. Residues 183–205 (AAPRLSPLAWAVLLLPFLLLQTS) constitute a propeptide, removed in mature form.

It belongs to the ephrin family. As to quaternary structure, monomer. Homodimer. Forms heterodimers with EPHA2. Binds to the receptor tyrosine kinases EPHA2, EPHA3, EPHA4, EPHA5, EPHA6 and EPHA7. Also binds with low affinity to EPHA1. Undergoes proteolysis by a metalloprotease to give rise to a soluble monomeric form. In terms of processing, N-Glycosylation is required for binding to EPHA2 receptor and inducing its internalization.

The protein localises to the cell membrane. It localises to the secreted. Its function is as follows. Cell surface GPI-bound ligand for Eph receptors, a family of receptor tyrosine kinases which are crucial for migration, repulsion and adhesion during neuronal, vascular and epithelial development. Binds promiscuously Eph receptors residing on adjacent cells, leading to contact-dependent bidirectional signaling into neighboring cells. Plays an important role in angiogenesis and tumor neovascularization. The recruitment of VAV2, VAV3 and PI3-kinase p85 subunit by phosphorylated EPHA2 is critical for EFNA1-induced RAC1 GTPase activation and vascular endothelial cell migration and assembly. Exerts anti-oncogenic effects in tumor cells through activation and down-regulation of EPHA2. Activates EPHA2 by inducing tyrosine phosphorylation which leads to its internalization and degradation. Acts as a negative regulator in the tumorigenesis of gliomas by down-regulating EPHA2 and FAK. Can evoke collapse of embryonic neuronal growth cone and regulates dendritic spine morphogenesis. The chain is Ephrin-A1 (EFNA1) from Sus scrofa (Pig).